Here is a 388-residue protein sequence, read N- to C-terminus: GTPase Obg (388 aa).

The Obg domain occupies 1–159 (MKFVDEANIR…RSIKLELLLL (159 aa)). One can recognise an OBG-type G domain in the interval 160-333 (ADVGLLGMPN…LSIKMLDYIR (174 aa)). GTP contacts are provided by residues 166 to 173 (GMPNAGKS), 191 to 195 (FTTLV), 213 to 216 (DIPG), 283 to 286 (NKTD), and 314 to 316 (SAY). 2 residues coordinate Mg(2+): Ser-173 and Thr-193.

The protein belongs to the TRAFAC class OBG-HflX-like GTPase superfamily. OBG GTPase family. As to quaternary structure, monomer. It depends on Mg(2+) as a cofactor.

The protein resides in the cytoplasm. In terms of biological role, an essential GTPase which binds GTP, GDP and possibly (p)ppGpp with moderate affinity, with high nucleotide exchange rates and a fairly low GTP hydrolysis rate. Plays a role in control of the cell cycle, stress response, ribosome biogenesis and in those bacteria that undergo differentiation, in morphogenesis control. The protein is GTPase Obg of Shewanella frigidimarina (strain NCIMB 400).